A 432-amino-acid polypeptide reads, in one-letter code: CinA-like protein (432 aa).

It belongs to the CinA family.

The polypeptide is CinA-like protein (Colwellia psychrerythraea (strain 34H / ATCC BAA-681) (Vibrio psychroerythus)).